Reading from the N-terminus, the 613-residue chain is Serine/threonine-protein kinase pkpA (613 aa).

The Protein kinase domain maps to 17 to 269; the sequence is SKLNTVLGKG…AQEILEHRFL (253 aa). Residues 23 to 31 and Lys50 contribute to the ATP site; that span reads LGKGAYKVV. Asp140 (proton acceptor) is an active-site residue. Disordered regions lie at residues 424 to 475 and 589 to 613; these read LQPQ…STML and VTQRGLQGTRSGASTPVEEQEQELM. The segment covering 427-441 has biased composition (pro residues); it reads QPQPQPQPQPQPQPQ. Residues 442-475 are compositionally biased toward low complexity; sequence PQFQLQPQLQYLSPQSTTSPGPTSDDNSTNSTML. Residues 592–602 show a composition bias toward polar residues; that stretch reads RGLQGTRSGAS.

This sequence belongs to the protein kinase superfamily. Ser/Thr protein kinase family.

It carries out the reaction L-seryl-[protein] + ATP = O-phospho-L-seryl-[protein] + ADP + H(+). The enzyme catalyses L-threonyl-[protein] + ATP = O-phospho-L-threonyl-[protein] + ADP + H(+). Its function is as follows. Serine/threonine protein kinase that probably participates as an intermediate in an intracellular system controlling nuclear proliferation. This is Serine/threonine-protein kinase pkpA (pkpA) from Phycomyces blakesleeanus (strain ATCC 8743b / DSM 1359 / FGSC 10004 / NBRC 33097 / NRRL 1555).